A 469-amino-acid chain; its full sequence is Dihydrolipoyl dehydrogenase (469 aa).

FAD-binding positions include 40 to 48 (EKAVLGGVC), lysine 57, and alanine 120. A disulfide bridge connects residues cysteine 48 and cysteine 53. NAD(+) is bound by residues 186-190 (GGGAI), glutamate 209, and 275-278 (AVGV). FAD is bound by residues aspartate 317 and alanine 325. The active-site Proton acceptor is the histidine 450.

It belongs to the class-I pyridine nucleotide-disulfide oxidoreductase family. As to quaternary structure, homodimer. FAD is required as a cofactor.

Its subcellular location is the cytoplasm. It carries out the reaction N(6)-[(R)-dihydrolipoyl]-L-lysyl-[protein] + NAD(+) = N(6)-[(R)-lipoyl]-L-lysyl-[protein] + NADH + H(+). Lipoamide dehydrogenase is a component of the alpha-ketoacid dehydrogenase complexes. The protein is Dihydrolipoyl dehydrogenase (lpd) of Chlorobaculum tepidum (strain ATCC 49652 / DSM 12025 / NBRC 103806 / TLS) (Chlorobium tepidum).